Reading from the N-terminus, the 100-residue chain is Putative membrane protein insertion efficiency factor (100 aa).

This sequence belongs to the UPF0161 family.

Its subcellular location is the cell membrane. Its function is as follows. Could be involved in insertion of integral membrane proteins into the membrane. This Enterococcus faecalis (strain ATCC 700802 / V583) protein is Putative membrane protein insertion efficiency factor.